A 592-amino-acid polypeptide reads, in one-letter code: Potassium-transporting ATPase potassium-binding subunit (592 aa).

10 helical membrane-spanning segments follow: residues 7 to 27, 60 to 80, 132 to 152, 175 to 195, 279 to 299, 310 to 330, 409 to 429, 449 to 469, 513 to 533, and 556 to 576; these read ILLG…GTYI, LKYA…VYAL, ALAV…IALI, LHVL…QGVI, LSNF…CFTF, WAVL…AMHF, GLYG…LMIG, IAIL…VMLA, VMLG…VLAI, and LFVT…YVPA.

This sequence belongs to the KdpA family. As to quaternary structure, the system is composed of three essential subunits: KdpA, KdpB and KdpC.

The protein localises to the cell inner membrane. Part of the high-affinity ATP-driven potassium transport (or Kdp) system, which catalyzes the hydrolysis of ATP coupled with the electrogenic transport of potassium into the cytoplasm. This subunit binds the periplasmic potassium ions and delivers the ions to the membrane domain of KdpB through an intramembrane tunnel. This is Potassium-transporting ATPase potassium-binding subunit from Dechloromonas aromatica (strain RCB).